The chain runs to 1463 residues: Alpha-agarase (1463 aa).

Positions 1–27 (MITSSKKIVSAMLSTSLWIGVASAAYA) are cleaved as a signal peptide. Positions 28–684 (ETTNVEAEGY…PSTLSESIFT (657 aa)) are excised as a propeptide. Disordered stretches follow at residues 166–191 (VTPE…PGTP) and 512–549 (TDDI…PQPG). The span at 518–536 (CANTPSGETANATGCSSSQ) shows a compositional bias: polar residues. Positions 534-677 (SSQEGGGTDP…GGTNFVHPST (144 aa)) constitute a PA14 domain. Residues 701 to 832 (IIVELESFVF…QWSGDRVRFT (132 aa)) form the CBM6 domain.

The protein belongs to the glycosyl hydrolase 96 family. As to quaternary structure, monomer. The cofactor is Ca(2+).

The catalysed reaction is Endohydrolysis of 1,3-alpha-L-galactosidic linkages in agarose, yielding agarotetraose as the major product.. In terms of biological role, alpha-agarase. Hydrolyzes agarose, agarohexaose, neoagarohexaose and porphyran. Hydrolysis of porphyran by this enzyme improves its antioxidant activity. Does not hydrolyze kappa-carrageenan, iota-carrageenen or lambda-carrageenan. The polypeptide is Alpha-agarase (Thalassotalea agarivorans (Thalassomonas agarivorans)).